A 471-amino-acid chain; its full sequence is Ribulose bisphosphate carboxylase large chain (471 aa).

2 residues coordinate substrate: N115 and T165. Catalysis depends on K167, which acts as the Proton acceptor. K169 is a binding site for substrate. Mg(2+)-binding residues include K193, D195, and E196. K193 is subject to N6-carboxylysine. H286 (proton acceptor) is an active-site residue. R287, H319, and S371 together coordinate substrate.

It belongs to the RuBisCO large chain family. Type I subfamily. In terms of assembly, heterohexadecamer of 8 large chains and 8 small chains. Mg(2+) serves as cofactor.

It is found in the carboxysome. The enzyme catalyses 2 (2R)-3-phosphoglycerate + 2 H(+) = D-ribulose 1,5-bisphosphate + CO2 + H2O. It carries out the reaction D-ribulose 1,5-bisphosphate + O2 = 2-phosphoglycolate + (2R)-3-phosphoglycerate + 2 H(+). Functionally, ruBisCO catalyzes two reactions: the carboxylation of D-ribulose 1,5-bisphosphate, the primary event in carbon dioxide fixation, as well as the oxidative fragmentation of the pentose substrate in the photorespiration process. Both reactions occur simultaneously and in competition at the same active site. In Synechococcus sp. (strain WH7803), this protein is Ribulose bisphosphate carboxylase large chain.